The following is a 290-amino-acid chain: 33 kDa chaperonin (290 aa).

2 disulfide bridges follow: C235/C237 and C268/C271.

It belongs to the HSP33 family. In terms of processing, under oxidizing conditions two disulfide bonds are formed involving the reactive cysteines. Under reducing conditions zinc is bound to the reactive cysteines and the protein is inactive.

Its subcellular location is the cytoplasm. Its function is as follows. Redox regulated molecular chaperone. Protects both thermally unfolding and oxidatively damaged proteins from irreversible aggregation. Plays an important role in the bacterial defense system toward oxidative stress. The sequence is that of 33 kDa chaperonin from Streptococcus uberis (strain ATCC BAA-854 / 0140J).